The chain runs to 336 residues: Aldo-keto reductase str7 (336 aa).

D57 is an NADP(+) binding site. The active-site Proton donor is Y62. Residue H124 participates in substrate binding. Residues 154–155, Q174, 206–220, and 283–291 contribute to the NADP(+) site; these read SE, SPLGRGLLTGQYKSP, and KKIKYLEEN.

This sequence belongs to the aldo/keto reductase family. Aldo/keto reductase 2 subfamily.

The protein operates within mycotoxin biosynthesis. Functionally, aldo-keto reductase; part of the gene cluster that mediates the biosynthesis of strobilurin A, an antifungal polyketide that contains a key beta-methoxyacrylate toxophore that targets the complex III of the mitochondrial electron transport chain. Strobilurin biosynthesis begins with construction of benzoyl CoA by step-wise elimination of ammonia from phenylalanine by the phenylalanine ammonia-lyase str11, oxygenation by str8 and retro-Claisen reaction to form benzoic acid, which is activated to its CoA thiolester benzoyl CoA by the dedicated CoA ligase str10. Benzoyl CoA forms the starter unit for the highly reducing polyketide synthase stpks1 that produces the polyketide prestrobilutin A. The FAD-dependent oxygenase str9 then catalyzes the key oxidative rearrangement responsible for the creation of the beta-methoxyacrylate toxophore. Str9 performs epoxidation of the 2,3 olefin of prestrobilutin A, followed by Meinwald rearrangement to furnish the aldehyde intermediate. Rapid enolization of the aldehyde intermediate would give the beta-methoxyacrylate skeleton and methylations catalyzed by str2 and str3 complete the synthesis and lead to the production of strobilurin A. The short-chain dehydrogenase stl2 and the dehydrogenase str4 play a role in the shunt pathway leading to the production of bolineol. The cluster encodes no obvious halogenase gene that could be involved in production of strobilurin B, nor any obvious dimethylallyl-transferase that could be involved in the production of strobilurin G. It is possible that unknown proteins encoded in, or near, the cluster (such as str1 or stl1) may form new classes of halogenases or dimethylally-transferases, or that the responsible genes are located elsewhere on the genome. Similarly, proteins encoded by str5/str6 hydrolases appear to have no chemical role in the biosynthesis of strobilurin A. Finally, no obvious self-resistance gene is found within the cluster. In Strobilurus tenacellus, this protein is Aldo-keto reductase str7.